A 368-amino-acid polypeptide reads, in one-letter code: MHVARLSIHRLRRFEAVEFHPASTLNLLTGDNGAGKTSVLEALHVMAYGRSFRGRVRDGLIRQGGQDLEIFVEWRERAGDSTERTRRAGLRHSGQEWTGRLDGEDVAQLGSLCAALAVVTFEPGSHVLISGGGEPRRRFLDWGLFHVEPDFLALWRRYARALKQRNALLKQGAQPQMLDAWDHELAESGETLTSRRLQYLERLQERLVPVATAIAPSLGLSALTFAPGWRRHEVSLADALLLARERDRQNGYTSQGPHRADWAPLFDALPGKDALSRGQAKLTALACLLAQAEDFAHERGEWPIMALDDLGSELDRHHQARVIQRLASAPAQVLITATELPPGLADAGKTLRRFHVEHGQLVPTTAAD.

An ATP-binding site is contributed by 30 to 37; sequence GDNGAGKT.

Belongs to the RecF family.

It localises to the cytoplasm. In terms of biological role, the RecF protein is involved in DNA metabolism; it is required for DNA replication and normal SOS inducibility. RecF binds preferentially to single-stranded, linear DNA. It also seems to bind ATP. The sequence is that of DNA replication and repair protein RecF from Xanthomonas campestris pv. campestris (strain 8004).